The sequence spans 218 residues: Probable nicotinate-nucleotide adenylyltransferase (218 aa).

Belongs to the NadD family.

The catalysed reaction is nicotinate beta-D-ribonucleotide + ATP + H(+) = deamido-NAD(+) + diphosphate. The protein operates within cofactor biosynthesis; NAD(+) biosynthesis; deamido-NAD(+) from nicotinate D-ribonucleotide: step 1/1. Its function is as follows. Catalyzes the reversible adenylation of nicotinate mononucleotide (NaMN) to nicotinic acid adenine dinucleotide (NaAD). This Corynebacterium glutamicum (strain ATCC 13032 / DSM 20300 / JCM 1318 / BCRC 11384 / CCUG 27702 / LMG 3730 / NBRC 12168 / NCIMB 10025 / NRRL B-2784 / 534) protein is Probable nicotinate-nucleotide adenylyltransferase.